The primary structure comprises 109 residues: Large ribosomal subunit protein uL18c (109 aa).

The protein belongs to the universal ribosomal protein uL18 family. In terms of assembly, part of the 50S ribosomal subunit; contacts the 5S rRNA.

It localises to the plastid. The protein localises to the chloroplast. Binds 5S rRNA, forms part of the central protuberance of the 50S subunit. The chain is Large ribosomal subunit protein uL18c (rpl18) from Cyanidioschyzon merolae (strain NIES-3377 / 10D) (Unicellular red alga).